Reading from the N-terminus, the 281-residue chain is Bifunctional protein FolD (281 aa).

NADP(+)-binding positions include 165-167 and S190; that span reads GRS.

It belongs to the tetrahydrofolate dehydrogenase/cyclohydrolase family. Homodimer.

It catalyses the reaction (6R)-5,10-methylene-5,6,7,8-tetrahydrofolate + NADP(+) = (6R)-5,10-methenyltetrahydrofolate + NADPH. The enzyme catalyses (6R)-5,10-methenyltetrahydrofolate + H2O = (6R)-10-formyltetrahydrofolate + H(+). Its pathway is one-carbon metabolism; tetrahydrofolate interconversion. Catalyzes the oxidation of 5,10-methylenetetrahydrofolate to 5,10-methenyltetrahydrofolate and then the hydrolysis of 5,10-methenyltetrahydrofolate to 10-formyltetrahydrofolate. The sequence is that of Bifunctional protein FolD from Polaromonas naphthalenivorans (strain CJ2).